Here is a 119-residue protein sequence, read N- to C-terminus: Large ribosomal subunit protein bL20 (119 aa).

Belongs to the bacterial ribosomal protein bL20 family.

Functionally, binds directly to 23S ribosomal RNA and is necessary for the in vitro assembly process of the 50S ribosomal subunit. It is not involved in the protein synthesizing functions of that subunit. This is Large ribosomal subunit protein bL20 from Halalkalibacterium halodurans (strain ATCC BAA-125 / DSM 18197 / FERM 7344 / JCM 9153 / C-125) (Bacillus halodurans).